A 318-amino-acid chain; its full sequence is Protein W (318 aa).

Disordered regions lie at residues 1-23 (MDQD…GGRE) and 38-318 (SEPT…KKGA). Over residues 7 to 20 (ILKEDSEVEREAPG) the composition is skewed to basic and acidic residues. Polar residues predominate over residues 50–59 (LHNTINTPQG). S68 carries the post-translational modification Phosphoserine; by host. Over residues 83 to 101 (RSGEESRVSGRTSKPEAEA) the composition is skewed to basic and acidic residues. S125 carries the phosphoserine; by host modification. The span at 150–168 (GIEDENREMAAHPDKRGED) shows a compositional bias: basic and acidic residues. The segment covering 191-206 (ASNNGRSMEPGSSHSA) has biased composition (polar residues). Residues S192, S249, S257, and S260 each carry the phosphoserine; by host modification.

This chain is Protein W (P/V/C), found in Sendai virus (strain Z) (SeV).